Reading from the N-terminus, the 484-residue chain is GRIP domain-containing protein RUD3 (484 aa).

Basic residues predominate over residues 1-15; the sequence is MGKNKKKTGKKAKSH. The tract at residues 1 to 75 is disordered; that stretch reads MGKNKKKTGK…GVDKQKVNDG (75 aa). Residues 16-30 show a composition bias toward basic and acidic residues; sequence PHVEDVDETVNKPEE. S55 and S64 each carry phosphoserine. A compositionally biased stretch (basic and acidic residues) spans 61 to 72; that stretch reads KDLSEGVDKQKV. Residues 84-383 adopt a coiled-coil conformation; it reads LEDKKAGDEM…LQIGKLRHEA (300 aa). Residues 401–452 enclose the GRIP domain; the sequence is SDSESVDKELISNLLISFVSIPRADPRKFEVLELLSNFLNWDEDKKQQAGLI. Residue S468 is modified to Phosphoserine.

Its subcellular location is the golgi apparatus lumen. Its function is as follows. Involved in the structural organization of the cis-Golgi and in vesicle targeting/fusion stages of ER to Golgi transport. This is GRIP domain-containing protein RUD3 (RUD3) from Saccharomyces cerevisiae (strain ATCC 204508 / S288c) (Baker's yeast).